The following is a 331-amino-acid chain: Phenylalanine--tRNA ligase alpha subunit (331 aa).

Glutamate 252 contributes to the Mg(2+) binding site.

Belongs to the class-II aminoacyl-tRNA synthetase family. Phe-tRNA synthetase alpha subunit type 1 subfamily. Tetramer of two alpha and two beta subunits. Mg(2+) serves as cofactor.

The protein resides in the cytoplasm. It catalyses the reaction tRNA(Phe) + L-phenylalanine + ATP = L-phenylalanyl-tRNA(Phe) + AMP + diphosphate + H(+). The polypeptide is Phenylalanine--tRNA ligase alpha subunit (Marinomonas sp. (strain MWYL1)).